Here is a 33-residue protein sequence, read N- to C-terminus: Protein YtiC (33 aa).

Residues 10-29 (FDMLSIYIIYKLIVSNNTWL) traverse the membrane as a helical segment.

It is found in the cell inner membrane. The protein is Protein YtiC of Escherichia coli (strain K12).